The chain runs to 378 residues: Cysteine endopeptidase RepA (378 aa).

An N-terminal signal peptide occupies residues 1–24; sequence MLRCFLVAAAAVALAAAAAAPARA. Positions 25 to 141 are cleaved as a propeptide — activation peptide; the sequence is IPFTESDLSS…SFRYGGDDED (117 aa). 3 disulfides stabilise this stretch: cysteine 164–cysteine 206, cysteine 198–cysteine 239, and cysteine 297–cysteine 350. Cysteine 167 is a catalytic residue. Residues histidine 303 and asparagine 324 contribute to the active site.

This sequence belongs to the peptidase C1 family.

The protein localises to the protein storage vacuole. Functionally, cysteine endopeptidase that digests in vitro both the acidic and basic subunits of glutelin, the major seed storage protein of rice. The protein is Cysteine endopeptidase RepA of Oryza sativa subsp. japonica (Rice).